Reading from the N-terminus, the 351-residue chain is Protein Wnt-8b (351 aa).

Residues 1–22 (MFLSKPSVYICLFTCVLQLSHS) form the signal peptide. A disulfide bridge links cysteine 54 with cysteine 65. An N-linked (GlcNAc...) asparagine glycan is attached at asparagine 103. 10 disulfides stabilise this stretch: cysteine 104-cysteine 112, cysteine 114-cysteine 132, cysteine 180-cysteine 194, cysteine 182-cysteine 189, cysteine 256-cysteine 294, cysteine 272-cysteine 287, cysteine 291-cysteine 333, cysteine 309-cysteine 324, cysteine 311-cysteine 321, and cysteine 316-cysteine 317. Residue serine 186 is the site of O-palmitoleoyl serine attachment. Residue asparagine 259 is glycosylated (N-linked (GlcNAc...) asparagine).

This sequence belongs to the Wnt family. In terms of processing, palmitoleoylation is required for efficient binding to frizzled receptors. Depalmitoleoylation leads to Wnt signaling pathway inhibition. Post-translationally, proteolytic processing by TIKI1 and TIKI2 promotes oxidation and formation of large disulfide-bond oligomers, leading to inactivation of WNT8B. Expression is restricted to the brain, and more specifically to the forebrain.

The protein resides in the secreted. The protein localises to the extracellular space. Its subcellular location is the extracellular matrix. In terms of biological role, ligand for members of the frizzled family of seven transmembrane receptors. May play an important role in the development and differentiation of certain forebrain structures, notably the hippocampus. The chain is Protein Wnt-8b (WNT8B) from Homo sapiens (Human).